Reading from the N-terminus, the 403-residue chain is Cytochrome P450-SU2 (403 aa).

The disordered stretch occupies residues 1 to 24 (MTTAERTAPPDALTVPASRAPGCP). C352 is a binding site for heme.

The protein belongs to the cytochrome P450 family. It depends on heme as a cofactor.

In terms of biological role, metabolism of a number of sulfonylurea herbicides. This Streptomyces griseolus protein is Cytochrome P450-SU2 (cyp105B1).